Reading from the N-terminus, the 414-residue chain is tRNA N6-adenosine threonylcarbamoyltransferase, mitochondrial (414 aa).

The N-terminal 29 residues, M1–H29, are a transit peptide targeting the mitochondrion. An N6-acetyllysine mark is found at K74 and K140. 2 residues coordinate a divalent metal cation: H147 and H151. Residues L169 to G173 and D202 contribute to the substrate site. At K203 the chain carries N6-acetyllysine. G222 and E226 together coordinate substrate. N6-acetyllysine is present on residues K230, K240, and K299. Substrate contacts are provided by residues S329 to N330 and T357. A divalent metal cation is bound at residue D358.

It belongs to the KAE1 / TsaD family. Monomer. Requires a divalent metal cation as cofactor. In terms of tissue distribution, widely expressed, with maximum expression in pituitary gland, prostate, rectum and uterus.

It is found in the mitochondrion. It catalyses the reaction L-threonylcarbamoyladenylate + adenosine(37) in tRNA = N(6)-L-threonylcarbamoyladenosine(37) in tRNA + AMP + H(+). Functionally, required for the formation of a threonylcarbamoyl group on adenosine at position 37 (t(6)A37) in mitochondrial tRNAs that read codons beginning with adenine. Probably involved in the transfer of the threonylcarbamoyl moiety of threonylcarbamoyl-AMP (TC-AMP) to the N6 group of A37. Involved in mitochondrial genome maintenance. In Homo sapiens (Human), this protein is tRNA N6-adenosine threonylcarbamoyltransferase, mitochondrial.